Here is a 731-residue protein sequence, read N- to C-terminus: Alpha-catulin (731 aa).

S373 and S537 each carry phosphoserine. The interval 535-559 (HLSLPKPTKNSANLKSLKPDKPDSE) is disordered.

The protein belongs to the vinculin/alpha-catenin family. In terms of assembly, interacts with ARHGEF1. Interacts with Dtna. The interaction is required for correct localization of both Ctnnal1 and Dtna.

Its subcellular location is the cytoplasm. It is found in the cytoskeleton. The protein resides in the cell membrane. In terms of biological role, may modulate the Rho pathway signaling by providing a scaffold for the Lbc Rho guanine nucleotide exchange factor (ARHGEF1). The polypeptide is Alpha-catulin (Ctnnal1) (Mus musculus (Mouse)).